A 309-amino-acid polypeptide reads, in one-letter code: Taste receptor type 2 member 66 (309 aa).

A topological domain (extracellular) is located at residue M1. A helical membrane pass occupies residues 2–22 (ITFLPIIFSILIVVTFVIGNF). Residues 23-46 (ANGFIALANSIEWFKRQKISFADQ) lie on the Cytoplasmic side of the membrane. The chain crosses the membrane as a helical span at residues 47 to 67 (ILTALAVPRVGLLWVLLLNWY). The Extracellular segment spans residues 68–86 (ATELNPAFYSIEVRITAYN). Residues 87 to 107 (LWAVINHFSNWLATSLSIFYL) form a helical membrane-spanning segment. The Cytoplasmic segment spans residues 108 to 126 (LKIANFSNLIFLRLKRRVK). A helical transmembrane segment spans residues 127–147 (SVVLVILLGPLLFLVCHLFVI). Residues 148–178 (NMNQIIWTKEYEGNMTWKIKLRSAMYLSNTT) lie on the Extracellular side of the membrane. N-linked (GlcNAc...) asparagine glycosylation is found at N161 and N176. The chain crosses the membrane as a helical span at residues 179–199 (VTILANLVPFTVTLISFLLLV). Over 200 to 229 (CSLCKHLKKMQLHGKGSQDPSTKVHIKALQ) the chain is Cytoplasmic. Residues 230-250 (TVISFLLLCAIYFVSVIISVW) form a helical membrane-spanning segment. Over 251-259 (SFKNLENKP) the chain is Extracellular. Residues 260 to 280 (VFMFCQAIGFSCSSAHPFILI) traverse the membrane as a helical segment. At 281–309 (WGNKKLKQPFLSVLWQMRYWVKGEKPSSS) the chain is on the cytoplasmic side.

This sequence belongs to the G-protein coupled receptor T2R family.

The protein resides in the membrane. In terms of biological role, receptor that may play a role in the perception of bitterness and is gustducin-linked. May play a role in sensing the chemical composition of the gastrointestinal content. The activity of this receptor may stimulate alpha gustducin, mediate PLC-beta-2 activation and lead to the gating of TRPM5. In Pan paniscus (Pygmy chimpanzee), this protein is Taste receptor type 2 member 66 (TAS2R66).